Here is a 101-residue protein sequence, read N- to C-terminus: Large ribosomal subunit protein uL23 (101 aa).

The protein belongs to the universal ribosomal protein uL23 family. In terms of assembly, part of the 50S ribosomal subunit. Contacts protein L29, and trigger factor when it is bound to the ribosome.

Its function is as follows. One of the early assembly proteins it binds 23S rRNA. One of the proteins that surrounds the polypeptide exit tunnel on the outside of the ribosome. Forms the main docking site for trigger factor binding to the ribosome. This Rhodococcus jostii (strain RHA1) protein is Large ribosomal subunit protein uL23.